The following is a 135-amino-acid chain: Large ribosomal subunit protein bL19 (135 aa).

It belongs to the bacterial ribosomal protein bL19 family.

Its function is as follows. This protein is located at the 30S-50S ribosomal subunit interface and may play a role in the structure and function of the aminoacyl-tRNA binding site. The sequence is that of Large ribosomal subunit protein bL19 from Xanthomonas euvesicatoria pv. vesicatoria (strain 85-10) (Xanthomonas campestris pv. vesicatoria).